Here is a 483-residue protein sequence, read N- to C-terminus: Glycogen synthase (483 aa).

Residue Lys-15 coordinates ADP-alpha-D-glucose.

Belongs to the glycosyltransferase 1 family. Bacterial/plant glycogen synthase subfamily.

It carries out the reaction [(1-&gt;4)-alpha-D-glucosyl](n) + ADP-alpha-D-glucose = [(1-&gt;4)-alpha-D-glucosyl](n+1) + ADP + H(+). It functions in the pathway glycan biosynthesis; glycogen biosynthesis. Synthesizes alpha-1,4-glucan chains using ADP-glucose. This is Glycogen synthase from Exiguobacterium sibiricum (strain DSM 17290 / CCUG 55495 / CIP 109462 / JCM 13490 / 255-15).